A 199-amino-acid polypeptide reads, in one-letter code: Peroxiredoxin-1 (199 aa).

The residue at position 2 (Ser2) is an N-acetylserine. The region spanning Ala6–Phe165 is the Thioredoxin domain. Lys7 is subject to N6-acetyllysine; alternate. Lys7 is covalently cross-linked (Glycyl lysine isopeptide (Lys-Gly) (interchain with G-Cter in SUMO2); alternate). 2 positions are modified to N6-acetyllysine: Lys16 and Lys27. Ser32 is subject to Phosphoserine. At Lys35 the chain carries N6-acetyllysine; alternate. An N6-succinyllysine; alternate modification is found at Lys35. The active-site Cysteine sulfenic acid (-SOH) intermediate is Cys52. At Thr90 the chain carries Phosphothreonine. Lys120 participates in a covalent cross-link: Glycyl lysine isopeptide (Lys-Gly) (interchain with G-Cter in SUMO2). Lys136 is subject to N6-acetyllysine. The segment at Gly176–Lys199 is disordered. Residues Ile184–Lys199 show a composition bias toward basic and acidic residues. Lys185 is covalently cross-linked (Glycyl lysine isopeptide (Lys-Gly) (interchain with G-Cter in SUMO1)). The residue at position 197 (Lys197) is an N6-acetyllysine.

It belongs to the peroxiredoxin family. AhpC/Prx1 subfamily. In terms of assembly, homodimer; disulfide-linked, upon oxidation. 5 homodimers assemble to form a ring-like decamer. Interacts with GDPD5; forms a mixed-disulfide with GDPD5. Interacts with SESN1 and SESN2. Interacts with FAM107A. Phosphorylated on Thr-90 during the M-phase, which leads to a decrease in enzymatic activity. In terms of processing, acetylation increases reducing activity and resistance to superoxidation. Deacetylated by HDAC6 which decreases reducing activity. Detected in heart and skeletal muscle (at protein level).

Its subcellular location is the cytoplasm. It carries out the reaction a hydroperoxide + [thioredoxin]-dithiol = an alcohol + [thioredoxin]-disulfide + H2O. Its function is as follows. Thiol-specific peroxidase that catalyzes the reduction of hydrogen peroxide and organic hydroperoxides to water and alcohols, respectively. Plays a role in cell protection against oxidative stress by detoxifying peroxides and as sensor of hydrogen peroxide-mediated signaling events. Might participate in the signaling cascades of growth factors and tumor necrosis factor-alpha by regulating the intracellular concentrations of H(2)O(2). Reduces an intramolecular disulfide bond in GDPD5 that gates the ability to GDPD5 to drive postmitotic motor neuron differentiation. The protein is Peroxiredoxin-1 (PRDX1) of Myotis lucifugus (Little brown bat).